Here is a 201-residue protein sequence, read N- to C-terminus: ATP-dependent Clp protease proteolytic subunit (201 aa).

The active-site Nucleophile is the serine 101. The active site involves histidine 126.

This sequence belongs to the peptidase S14 family. As to quaternary structure, component of the chloroplastic Clp protease core complex.

Its subcellular location is the plastid. It localises to the chloroplast stroma. The catalysed reaction is Hydrolysis of proteins to small peptides in the presence of ATP and magnesium. alpha-casein is the usual test substrate. In the absence of ATP, only oligopeptides shorter than five residues are hydrolyzed (such as succinyl-Leu-Tyr-|-NHMec, and Leu-Tyr-Leu-|-Tyr-Trp, in which cleavage of the -Tyr-|-Leu- and -Tyr-|-Trp bonds also occurs).. Cleaves peptides in various proteins in a process that requires ATP hydrolysis. Has a chymotrypsin-like activity. Plays a major role in the degradation of misfolded proteins. This is ATP-dependent Clp protease proteolytic subunit from Staurastrum punctulatum (Green alga).